We begin with the raw amino-acid sequence, 428 residues long: Enolase (428 aa).

Q163 lines the (2R)-2-phosphoglycerate pocket. The Proton donor role is filled by E205. Residues D242, E285, and D312 each coordinate Mg(2+). (2R)-2-phosphoglycerate contacts are provided by K337, R366, S367, and K388. The active-site Proton acceptor is the K337.

Belongs to the enolase family. It depends on Mg(2+) as a cofactor.

The protein resides in the cytoplasm. It localises to the secreted. It is found in the cell surface. It catalyses the reaction (2R)-2-phosphoglycerate = phosphoenolpyruvate + H2O. It functions in the pathway carbohydrate degradation; glycolysis; pyruvate from D-glyceraldehyde 3-phosphate: step 4/5. Functionally, catalyzes the reversible conversion of 2-phosphoglycerate (2-PG) into phosphoenolpyruvate (PEP). It is essential for the degradation of carbohydrates via glycolysis. This chain is Enolase, found in Polynucleobacter asymbioticus (strain DSM 18221 / CIP 109841 / QLW-P1DMWA-1) (Polynucleobacter necessarius subsp. asymbioticus).